The sequence spans 67 residues: Large ribosomal subunit protein bL35 (67 aa).

The protein belongs to the bacterial ribosomal protein bL35 family.

In Rhizobium johnstonii (strain DSM 114642 / LMG 32736 / 3841) (Rhizobium leguminosarum bv. viciae), this protein is Large ribosomal subunit protein bL35.